We begin with the raw amino-acid sequence, 2016 residues long: Cell adhesion molecule Dscam1 (2016 aa).

The signal sequence occupies residues 1–28 (MNMPNERLKWLMLFAAVALIACGSQTLA). At 29 to 1618 (ANPPDADQKG…TIRIILSNLN (1590 aa)) the chain is on the extracellular side. Ig-like C2-type domains follow at residues 39 to 134 (PVFL…VHVR), 138 to 230 (AQYY…TRLS), 247 to 338 (PKIN…TVLT), 342 to 421 (PLSA…AELK), 428 to 522 (PPVI…AKLN), 527 to 613 (PYIR…LEVQ), 618 to 712 (PQVL…LQVN), 715 to 807 (PRWI…IMIS), and 812 to 904 (PEFT…ASIN). N-linked (GlcNAc...) asparagine glycosylation is present at N53. C61 and C117 form a disulfide bridge. Zn(2+) is bound by residues D144, N146, and L161. Intrachain disulfides connect C160-C217, C160-T219, C160-K220, C269-C322, P270-V323, A276-G329, C364-C405, C450-C506, C547-C596, C640-C694, V641-C694, V641-I695, and C736-C790. Residue N325 is glycosylated (N-linked (GlcNAc...) asparagine). N-linked (GlcNAc...) asparagine glycans are attached at residues N492 and N577. N-linked (GlcNAc...) asparagine glycosylation is present at N820. Residues C833 and C890 are joined by a disulfide bond. Fibronectin type-III domains follow at residues 913 to 1007 (MPYA…TAEE), 1012 to 1116 (KPQN…TPSQ), 1117 to 1213 (PPSD…TEPD), and 1217 to 1310 (APTD…PSDQ). N-linked (GlcNAc...) asparagine glycans are attached at residues N1022, N1055, and N1186. The Ig-like C2-type 10 domain occupies 1312–1394 (PAKIASFDDT…ENSIAKDSIT (83 aa)). A disulfide bond links C1334 and C1382. Fibronectin type-III domains lie at 1402 to 1495 (PPQS…TKGQ) and 1499 to 1594 (LPEK…TGGT). Residues 1619–1639 (LVVPVVAALLVIIIAIIVICI) form a helical membrane-spanning segment. Topologically, residues 1640-2016 (LRSKGNHHKD…GFTAYDTMAV (377 aa)) are cytoplasmic. Positions 1685 to 1688 (PPVP) match the PXXP motif 1; SH3-binding motif. Residues 1688–1719 (PGSNYNTCDRIKRGRGGLRSNHSTWDPRRNPN) are disordered. The PXXP motif 2; SH3-binding motif lies at 1727 to 1730 (PPVP). Disordered stretches follow at residues 1787–1846 (GHAG…DDPA) and 1862–2016 (SQGG…TMAV). A compositionally biased stretch (polar residues) spans 1826-1836 (KNSQGGQSSIY). The short motif at 1842 to 1845 (YDDP) is the YXXP motif 1; potential SH2-binding element. Residues 1875–1878 (YDDP) carry the YXXP motif 2; potential SH2-binding motif. Positions 1897-1918 (GQPYDHYGSRGSMGRRSIGSAR) are enriched in low complexity. A Polyproline tract (probable SH3-binding) motif is present at residues 1925 to 1932 (PEPPPPPP). Composition is skewed to basic and acidic residues over residues 1944–1962 (DSKE…DHGP) and 1974–1993 (QPKD…RNET). Positions 1994–2004 (GPKQLQLQQAN) are enriched in polar residues.

As to quaternary structure, homodimer (via extracellular region); alternative splicing produces a potential 19,008 different ectodomains and the majority of these show strong isoform-specific homodimerization. Interacts (via cytoplasmic domain) with dock/dreadlocks (via SH2 and SH3 domains); the interaction is direct and may require Dscam1 to be phosphorylated. Phosphorylated on tyrosine residues in the intracellular domain. Tyrosine protein kinase Src42A and possibly Src64B are involved in this phosphorylation. Post-translationally, glycosylation on Asn-53 and Asn-325 is involved in stabilizing dimerization. In terms of processing, proteolytically processed, probably to generate a secreted form. In terms of tissue distribution, secreted into the hemolymph (at protein level). Expressed in brain and eye-antennal imaginal disks, including R3/R4 and R7 photoreceptor cells. Individual R3/R4 cells express between 14 and 50 randomly generated mRNAs encoding distinct isoforms.

The protein resides in the cell membrane. It is found in the cell projection. It localises to the neuron projection. Its subcellular location is the axon. The protein localises to the perikaryon. The protein resides in the dendrite. It is found in the secreted. Its function is as follows. Cell surface receptor involved in guidance and targeting of growing nerve axons. Required during Bolwig's organ differentiation for accurate and efficient targeting of photoreceptor neuron axons to their synaptic targets in the brain via the P2 intermediate target neuron. Involved in isoneural self-avoidance during dendrite arborization but not in heteroneural recognition and repulsion during tiling by related neurons of the same class. Involved in regulating axon bifurcation and divergent extension in the developing mushroom body. Essential for axon arborisation in ellipsoid body. Exhibits an extraordinary level of molecular diversity resulting from alternative splicing. Isoforms differing in their ectodomain makeup show a high degree of functional redundancy while isoforms with different transmembrane domains are involved in different neuronal morphogenetic processes and are differentially targeted to dendrites or axons. The vast majority of isoforms exhibit strong isoform-specific homophilic binding. Individual cells express a distinct randomly generated repertoire of isoforms. Cell surfaces bearing identical repertoires of Dscam1 isoforms, such as those from the same cell, trigger recognition and avoidance. A subset of isoforms is expressed in fat body cells and hemocytes, cells that are part of the insect immune response, and these isoforms are secreted into the hemolymph. The secreted form comprising the ectodomain can bind to bacteria, such as Escherichia coli, and may act as an opsonin enhancing their phagocytosis by hemocytes. In Drosophila melanogaster (Fruit fly), this protein is Cell adhesion molecule Dscam1.